Consider the following 305-residue polypeptide: Translation initiation factor eIF2B subunit alpha (305 aa).

K35 carries the N6-acetyllysine modification.

The protein belongs to the eIF-2B alpha/beta/delta subunits family. Component of the translation initiation factor 2B (eIF2B) complex which is a heterodecamer of two sets of five different subunits: alpha, beta, gamma, delta and epsilon. Subunits alpha, beta and delta comprise a regulatory subcomplex and subunits epsilon and gamma comprise a catalytic subcomplex. Within the complex, the hexameric regulatory complex resides at the center, with the two heterodimeric catalytic subcomplexes bound on opposite sides.

The protein localises to the cytoplasm. Its subcellular location is the cytosol. Its activity is regulated as follows. Activated by the chemical integrated stress response (ISR) inhibitor ISRIB which stimulates guanine nucleotide exchange factor activity for both phosphorylated and unphosphorylated eIF2. Its function is as follows. Acts as a component of the translation initiation factor 2B (eIF2B) complex, which catalyzes the exchange of GDP for GTP on eukaryotic initiation factor 2 (eIF2) gamma subunit. Its guanine nucleotide exchange factor activity is repressed when bound to eIF2 complex phosphorylated on the alpha subunit, thereby limiting the amount of methionyl-initiator methionine tRNA available to the ribosome and consequently global translation is repressed. This chain is Translation initiation factor eIF2B subunit alpha (EIF2B1), found in Macaca fascicularis (Crab-eating macaque).